A 581-amino-acid polypeptide reads, in one-letter code: Suppressor of cytokine signaling 7 (581 aa).

Disordered stretches follow at residues 1–23 (MVFR…EPGP), 89–109 (PPPP…DPTE), 123–272 (EAES…RTQS), and 297–316 (QRGL…RRSL). Composition is skewed to pro residues over residues 89–99 (PPPPQPQPPAA), 154–164 (PPGPELPPVPF), and 187–198 (QPPPPPPPPGPL). A mediates interaction with SORBS3 region spans residues 124–494 (AESLETNSCS…GKFLYFLRSR (371 aa)). Basic residues predominate over residues 208 to 219 (GSFKIRLSRLFR). The segment covering 303–313 (PHPPTPPPPPR) has biased composition (pro residues). The region spanning 400 to 509 (WYWGPMNWED…PTPVQLLYPV (110 aa)) is the SH2 domain. In terms of domain architecture, SOCS box spans 504 to 554 (QLLYPVSRFSNVKSLQHLCRFRIRQLVRIDHIPDLPLPKPLISYIRKFYYY).

As to quaternary structure, substrate-recognition component of the ECS(SOCS7) complex, composed of SOCS7, CUL5, ELOB, ELOC and RNF7/RBX2. Interacts, via the third proline-rich region, with the second SH3 domain of the adapter protein NCK1. Also interacts with GRB2, INSR, PLCG1, SORBS3/vinexin, and phosphorylated STAT3 and STAT5. Interacts with SEPT6. Interacts with phosphorylated IRS4 and PIK3R1. In terms of tissue distribution, expressed in brain and leukocytes. Also in fetal lung fibroblasts and fetal brain.

The protein resides in the cytoplasm. It is found in the nucleus. Its subcellular location is the cell membrane. It functions in the pathway protein modification; protein ubiquitination. Functionally, substrate-recognition component of a cullin-5-RING E3 ubiquitin-protein ligase complex (ECS complex, also named CRL5 complex), which mediates the ubiquitination and subsequent proteasomal degradation of target proteins, such as DAB1 and IRS1. Specifically recognizes and binds phosphorylated proteins via its SH2 domain, promoting their ubiquitination. The ECS(SOCS7) complex acts as a key regulator of reelin signaling by mediating ubiquitination and degradation of phosphorylated DAB1 in the cortical plate of the developing cerebral cortex, thereby regulating neuron positioning during cortex development. Functions in insulin signaling and glucose homeostasis through IRS1 ubiquitination and subsequent proteasomal degradation. Also inhibits prolactin, growth hormone and leptin signaling by preventing STAT3 and STAT5 activation, sequestering them in the cytoplasm and reducing their binding to DNA. The sequence is that of Suppressor of cytokine signaling 7 from Homo sapiens (Human).